The following is a 248-amino-acid chain: Ubiquinone/menaquinone biosynthesis C-methyltransferase UbiE (248 aa).

S-adenosyl-L-methionine-binding positions include Ser-68, Asp-92, and 120–121 (NA).

This sequence belongs to the class I-like SAM-binding methyltransferase superfamily. MenG/UbiE family.

The catalysed reaction is a 2-demethylmenaquinol + S-adenosyl-L-methionine = a menaquinol + S-adenosyl-L-homocysteine + H(+). The enzyme catalyses a 2-methoxy-6-(all-trans-polyprenyl)benzene-1,4-diol + S-adenosyl-L-methionine = a 5-methoxy-2-methyl-3-(all-trans-polyprenyl)benzene-1,4-diol + S-adenosyl-L-homocysteine + H(+). Its pathway is quinol/quinone metabolism; menaquinone biosynthesis; menaquinol from 1,4-dihydroxy-2-naphthoate: step 2/2. It participates in cofactor biosynthesis; ubiquinone biosynthesis. Its function is as follows. Methyltransferase required for the conversion of demethylmenaquinol (DMKH2) to menaquinol (MKH2) and the conversion of 2-polyprenyl-6-methoxy-1,4-benzoquinol (DDMQH2) to 2-polyprenyl-3-methyl-6-methoxy-1,4-benzoquinol (DMQH2). The chain is Ubiquinone/menaquinone biosynthesis C-methyltransferase UbiE from Rickettsia typhi (strain ATCC VR-144 / Wilmington).